The primary structure comprises 352 residues: tRNA-specific 2-thiouridylase MnmA (352 aa).

6–13 (AVSGGTDS) serves as a coordination point for ATP. Cysteine 92 functions as the Nucleophile in the catalytic mechanism. The cysteines at positions 92 and 189 are disulfide-linked. An ATP-binding site is contributed by glycine 116. An interaction with tRNA region spans residues 139–141 (KDQ). Cysteine 189 acts as the Cysteine persulfide intermediate in catalysis. The interaction with tRNA stretch occupies residues 294-295 (RY).

It belongs to the MnmA/TRMU family.

The protein resides in the cytoplasm. It carries out the reaction S-sulfanyl-L-cysteinyl-[protein] + uridine(34) in tRNA + AH2 + ATP = 2-thiouridine(34) in tRNA + L-cysteinyl-[protein] + A + AMP + diphosphate + H(+). Its function is as follows. Catalyzes the 2-thiolation of uridine at the wobble position (U34) of tRNA, leading to the formation of s(2)U34. This chain is tRNA-specific 2-thiouridylase MnmA, found in Lawsonia intracellularis (strain PHE/MN1-00).